Here is a 282-residue protein sequence, read N- to C-terminus: Formate channel FocB (282 aa).

At 1-35 (MRNKLSFDLQLSARKAAIAERIAAHKIARSKVSVF) the chain is on the cytoplasmic side. The chain crosses the membrane as a helical span at residues 36-56 (LMAMSAGVFMAIGFTFYLSVI). Over 57–68 (ADAPSSQALTHL) the chain is Periplasmic. Residues 69–89 (VGGLCFTLGFILLAVCGTSLF) traverse the membrane as a helical segment. Over 90–112 (TSSVMTVMAKSRGVISWRTWLIN) the chain is Cytoplasmic. A helical membrane pass occupies residues 113–133 (ALLVACGNLAGIACFSLLIWF). The Periplasmic portion of the chain corresponds to 134 to 163 (SGLVMSENAMWGVAVLHCAEGKMHHTFTES). Residues 164 to 184 (VSLGIMCNLMVCLALWMSYCG) form a helical membrane-spanning segment. The Cytoplasmic segment spans residues 185-190 (RSLCDK). The helical transmembrane segment at 191 to 211 (IVAMILPITLFVASGFEHCIA) threads the bilayer. At 212 to 248 (NLFVIPFAIAIRHFAPPPFWQLAHSSADNFPALTVSH) the chain is on the periplasmic side. The chain crosses the membrane as a helical span at residues 249–269 (FITANLLPVMLGNIIGGAVLV). Topologically, residues 270–282 (SMCYRAIYLRQEP) are cytoplasmic.

Belongs to the FNT transporter (TC 1.A.16) family.

Its subcellular location is the cell inner membrane. The enzyme catalyses formate(in) = formate(out). With respect to regulation, the direction of formate translocation depends on external pH and electron donor source. Involved in the bidirectional transport of formate during mixed-acid fermentation. The protein is Formate channel FocB of Escherichia coli (strain K12).